Consider the following 263-residue polypeptide: Glutamate racemase (263 aa).

Residues 12–13 and 44–45 contribute to the substrate site; these read DS and YG. The active-site Proton donor/acceptor is the C75. 76-77 serves as a coordination point for substrate; that stretch reads NT. C186 functions as the Proton donor/acceptor in the catalytic mechanism. Substrate is bound at residue 187–188; that stretch reads TH.

This sequence belongs to the aspartate/glutamate racemases family.

It catalyses the reaction L-glutamate = D-glutamate. It functions in the pathway cell wall biogenesis; peptidoglycan biosynthesis. Its function is as follows. Provides the (R)-glutamate required for cell wall biosynthesis. This chain is Glutamate racemase, found in Ectopseudomonas mendocina (strain ymp) (Pseudomonas mendocina).